A 360-amino-acid polypeptide reads, in one-letter code: Cyclin-dependent kinase 10 (360 aa).

Residues 39-323 (FEKLNRIGEG…SGDCLESSYF (285 aa)) enclose the Protein kinase domain. Residues 45 to 53 (IGEGTYGIV) and Lys-68 each bind ATP. The active-site Proton acceptor is Asp-163. At Thr-196 the chain carries Phosphothreonine. The tract at residues 334 to 360 (LMPTFPHHRNKRAAPAAAEGQSKRCRP) is disordered.

Belongs to the protein kinase superfamily. CMGC Ser/Thr protein kinase family. CDC2/CDKX subfamily. As to quaternary structure, heterodimer with CCNQ, the interaction is required for kinase activity. Interacts with ETS2. Interacts with PRK2.

It localises to the cytoplasm. The protein resides in the cytoskeleton. It is found in the cilium basal body. The catalysed reaction is L-seryl-[protein] + ATP = O-phospho-L-seryl-[protein] + ADP + H(+). It carries out the reaction L-threonyl-[protein] + ATP = O-phospho-L-threonyl-[protein] + ADP + H(+). Functionally, cyclin-dependent kinase that phosphorylates the transcription factor ETS2 (in vitro) and positively controls its proteasomal degradation (in cells). Involved in the regulation of actin cytoskeleton organization through the phosphorylation of actin dynamics regulators such as PKN2. Is a negative regulator of ciliogenesis through phosphorylation of PKN2 and promotion of RhoA signaling. This Mus musculus (Mouse) protein is Cyclin-dependent kinase 10 (Cdk10).